A 439-amino-acid chain; its full sequence is Histidinol dehydrogenase (439 aa).

Residues Tyr129, Gln193, and Asn222 each contribute to the NAD(+) site. Residues Thr245, Gln267, and His270 each contribute to the substrate site. Residues Gln267 and His270 each contribute to the Zn(2+) site. Catalysis depends on proton acceptor residues Glu336 and His337. Substrate is bound by residues His337, Asp370, Glu424, and His429. Asp370 is a binding site for Zn(2+). Residue His429 participates in Zn(2+) binding.

It belongs to the histidinol dehydrogenase family. It depends on Zn(2+) as a cofactor.

It carries out the reaction L-histidinol + 2 NAD(+) + H2O = L-histidine + 2 NADH + 3 H(+). It functions in the pathway amino-acid biosynthesis; L-histidine biosynthesis; L-histidine from 5-phospho-alpha-D-ribose 1-diphosphate: step 9/9. In terms of biological role, catalyzes the sequential NAD-dependent oxidations of L-histidinol to L-histidinaldehyde and then to L-histidine. The polypeptide is Histidinol dehydrogenase (Cutibacterium acnes (strain DSM 16379 / KPA171202) (Propionibacterium acnes)).